Reading from the N-terminus, the 383-residue chain is Putative glutamate--cysteine ligase 2-2 (383 aa).

Residues 35-56 (RGDRDGAGGPPGGADPDGDLDG) form a disordered region.

Belongs to the glutamate--cysteine ligase type 2 family. YbdK subfamily.

The catalysed reaction is L-cysteine + L-glutamate + ATP = gamma-L-glutamyl-L-cysteine + ADP + phosphate + H(+). In terms of biological role, ATP-dependent carboxylate-amine ligase which exhibits weak glutamate--cysteine ligase activity. The sequence is that of Putative glutamate--cysteine ligase 2-2 from Frankia alni (strain DSM 45986 / CECT 9034 / ACN14a).